The sequence spans 411 residues: Isocitrate dehydrogenase [NADP] peroxisomal (411 aa).

NADP(+) is bound by residues 78–80 (TIT) and Arg-85. Residue Thr-80 coordinates substrate. Substrate is bound by residues 97–103 (SPNGTLR), Arg-112, and Arg-135. Asp-254 is a Mn(2+) binding site. Position 262 (Lys-262) interacts with NADP(+). Mn(2+) is bound at residue Asp-277. NADP(+) is bound by residues 312–317 (GTVTRH) and Asn-330.

This sequence belongs to the isocitrate and isopropylmalate dehydrogenases family. The cofactor is Mg(2+). It depends on Mn(2+) as a cofactor.

It is found in the peroxisome. It catalyses the reaction D-threo-isocitrate + NADP(+) = 2-oxoglutarate + CO2 + NADPH. May play a role in N-alkane metabolism, glutamate synthesis, and/or NADPH generation in the peroxisomes. In Candida tropicalis (Yeast), this protein is Isocitrate dehydrogenase [NADP] peroxisomal (IDP2).